Reading from the N-terminus, the 246-residue chain is uncharacterized protein (246 aa).

This is an uncharacterized protein from Acanthamoeba polyphaga (Amoeba).